We begin with the raw amino-acid sequence, 230 residues long: Uracil-DNA glycosylase (230 aa).

Catalysis depends on Asp70, which acts as the Proton acceptor.

It belongs to the uracil-DNA glycosylase (UDG) superfamily. UNG family.

It is found in the cytoplasm. It catalyses the reaction Hydrolyzes single-stranded DNA or mismatched double-stranded DNA and polynucleotides, releasing free uracil.. In terms of biological role, excises uracil residues from the DNA which can arise as a result of misincorporation of dUMP residues by DNA polymerase or due to deamination of cytosine. The sequence is that of Uracil-DNA glycosylase from Pseudomonas fluorescens (strain SBW25).